The following is a 227-amino-acid chain: Ribose-5-phosphate isomerase A (227 aa).

Substrate is bound by residues 26–29 (TGST), 82–85 (DGAD), and 95–98 (KGGG). Glu104 (proton acceptor) is an active-site residue. Lys122 contributes to the substrate binding site.

This sequence belongs to the ribose 5-phosphate isomerase family. As to quaternary structure, homodimer.

It carries out the reaction aldehydo-D-ribose 5-phosphate = D-ribulose 5-phosphate. The protein operates within carbohydrate degradation; pentose phosphate pathway; D-ribose 5-phosphate from D-ribulose 5-phosphate (non-oxidative stage): step 1/1. In terms of biological role, catalyzes the reversible conversion of ribose-5-phosphate to ribulose 5-phosphate. This chain is Ribose-5-phosphate isomerase A, found in Streptococcus equi subsp. zooepidemicus (strain H70).